Reading from the N-terminus, the 86-residue chain is RNA-binding protein Hfq (86 aa).

The 60-residue stretch at 9–68 folds into the Sm domain; that stretch reads DPYLNTLRKEKVGVSIYLVNGIKLQGTIESFDQFVILLKNTVSQMVYKHAISTVVPVRPI.

Belongs to the Hfq family. In terms of assembly, homohexamer.

Its function is as follows. RNA chaperone that binds small regulatory RNA (sRNAs) and mRNAs to facilitate mRNA translational regulation in response to envelope stress, environmental stress and changes in metabolite concentrations. Also binds with high specificity to tRNAs. This chain is RNA-binding protein Hfq, found in Pseudomonas fluorescens (strain ATCC BAA-477 / NRRL B-23932 / Pf-5).